A 321-amino-acid chain; its full sequence is Glucokinase (321 aa).

Ala8 to Thr13 is an ATP binding site.

The protein belongs to the bacterial glucokinase family.

The protein localises to the cytoplasm. The catalysed reaction is D-glucose + ATP = D-glucose 6-phosphate + ADP + H(+). The polypeptide is Glucokinase (Paramagnetospirillum magneticum (strain ATCC 700264 / AMB-1) (Magnetospirillum magneticum)).